The sequence spans 93 residues: MACQRHLLFLLLVLFAVSTQLSHGQHWSHGWYPGGKRELDMPASPEVSEEIKLCEGEECAYLRNPRKNLLKNILGRSNQKKNADVLARQLQKK.

An N-terminal signal peptide occupies residues 1–24 (MACQRHLLFLLLVLFAVSTQLSHG). Glutamine 25 is modified (pyrrolidone carboxylic acid). Glycine 34 bears the Glycine amide mark.

The protein belongs to the GnRH family. Midbrain and hindbrain.

The protein localises to the secreted. Functionally, stimulates the secretion of gonadotropins. The protein is Progonadoliberin-2 (gnrh2) of Aquarana catesbeiana (American bullfrog).